A 389-amino-acid polypeptide reads, in one-letter code: Chalcone synthase 2 (389 aa).

Cysteine 164 is an active-site residue.

The protein belongs to the thiolase-like superfamily. Chalcone/stilbene synthases family.

The catalysed reaction is (E)-4-coumaroyl-CoA + 3 malonyl-CoA + 3 H(+) = 2',4,4',6'-tetrahydroxychalcone + 3 CO2 + 4 CoA. It participates in secondary metabolite biosynthesis; flavonoid biosynthesis. The primary product of this enzyme is 4,2',4',6'-tetrahydroxychalcone (also termed naringenin-chalcone or chalcone) which can under specific conditions spontaneously isomerize into naringenin. This is Chalcone synthase 2 (CHS2) from Pisum sativum (Garden pea).